A 1138-amino-acid chain; its full sequence is Eukaryotic translation initiation factor 3 subunit A (1138 aa).

Residues 319 to 502 (LQRMAAHVLL…NSIYFGTDLT (184 aa)) form the PCI domain. 2 disordered regions span residues 590–633 (NNAR…NEIQ) and 817–1138 (ERFR…VKRR). Basic and acidic residues-rich tracts occupy residues 817 to 903 (ERFR…RVER), 923 to 967 (DRNE…KEND), 1003 to 1049 (GRDD…DQPQ), and 1058 to 1078 (DSPR…RDVR). Residues 1082-1100 (PKEGGGGVSGGGAGGGGGN) are compositionally biased toward gly residues. The span at 1107–1128 (PREEKAPPKREQAQDKENKAGD) shows a compositional bias: basic and acidic residues.

It belongs to the eIF-3 subunit A family. As to quaternary structure, component of the eukaryotic translation initiation factor 3 (eIF-3) complex. The eIF-3 complex interacts with pix.

It is found in the cytoplasm. Its function is as follows. RNA-binding component of the eukaryotic translation initiation factor 3 (eIF-3) complex, which is involved in protein synthesis of a specialized repertoire of mRNAs and, together with other initiation factors, stimulates binding of mRNA and methionyl-tRNAi to the 40S ribosome. The eIF-3 complex specifically targets and initiates translation of a subset of mRNAs involved in cell proliferation. This Drosophila virilis (Fruit fly) protein is Eukaryotic translation initiation factor 3 subunit A.